The sequence spans 1405 residues: Xanthine dehydrogenase (1405 aa).

Positions 17–104 (NKLTFYVNGV…GKHLITVEGI (88 aa)) constitute a 2Fe-2S ferredoxin-type domain. Residues cysteine 56, cysteine 61, cysteine 64, cysteine 86, cysteine 125, cysteine 128, cysteine 161, and cysteine 163 each coordinate [2Fe-2S] cluster. An FAD-binding PCMH-type domain is found at 288 to 474 (FGNEQKVWFR…TKIFVPETVP (187 aa)). FAD-binding positions include 316–323 (IVGGASEI), phenylalanine 397, 407–411 (TPAGN), aspartate 420, isoleucine 464, and lysine 483. Glutamine 833 and phenylalanine 864 together coordinate Mo-molybdopterin. Substrate-binding residues include glutamate 868 and arginine 946. Arginine 978 contacts Mo-molybdopterin. Residue phenylalanine 980 participates in substrate binding. Residue alanine 1147 participates in Mo-molybdopterin binding. Residue glutamate 1333 is the Proton acceptor of the active site.

Belongs to the xanthine dehydrogenase family. Homodimer. Requires Mo-molybdopterin as cofactor. It depends on [2Fe-2S] cluster as a cofactor. FAD is required as a cofactor.

It is found in the cytoplasm. It catalyses the reaction hypoxanthine + NAD(+) + H2O = xanthine + NADH + H(+). The enzyme catalyses xanthine + NAD(+) + H2O = urate + NADH + H(+). It functions in the pathway purine metabolism. Its activity is regulated as follows. Completely inhibited by allopurinol and significantly inhibited by adenine. Inhibited by Fe(2+), Cd(2+) and Zn(2+) and strongly inhibited by Cu(2+). Mg(2+) and Mo(2+) have no effect on activity. Key enzyme in purine degradation. Catalyzes the oxidation of hypoxanthine to xanthine. Catalyzes the oxidation of xanthine to uric acid. Oxidizes xanthine, hypoxanthine and pterine at high rates. Can also act on purine and guanine. In Blastobotrys adeninivorans (Yeast), this protein is Xanthine dehydrogenase.